The following is an 834-amino-acid chain: Periplasmic nitrate reductase (834 aa).

The tat-type signal signal peptide spans 1–29; sequence MNLTRREFAKANAAAIAAAAAGLPILVRA. Residues 41-97 form the 4Fe-4S Mo/W bis-MGD-type domain; the sequence is LVWNKAPCRFCGTGCSVMVATRDGQVVATHGDIKAEVNRGINCVKGYFLSKIMYGSD. [4Fe-4S] cluster contacts are provided by Cys48, Cys51, Cys55, and Cys83. Mo-bis(molybdopterin guanine dinucleotide) contacts are provided by residues Lys85, Gln152, Asn177, Cys181, 214–221, 245–249, 264–266, Met375, Gln379, Asn485, 511–512, Lys534, Asp561, and 721–730; these read WGSNMAEM, STFEH, QTD, SD, and TGRVLEHWHT. Position 797 (Phe797) interacts with substrate. Mo-bis(molybdopterin guanine dinucleotide)-binding residues include Asn805 and Lys822.

Belongs to the prokaryotic molybdopterin-containing oxidoreductase family. NasA/NapA/NarB subfamily. In terms of assembly, component of the periplasmic nitrate reductase NapAB complex composed of NapA and NapB. It depends on [4Fe-4S] cluster as a cofactor. The cofactor is Mo-bis(molybdopterin guanine dinucleotide). Predicted to be exported by the Tat system. The position of the signal peptide cleavage has not been experimentally proven.

The protein localises to the periplasm. The enzyme catalyses 2 Fe(II)-[cytochrome] + nitrate + 2 H(+) = 2 Fe(III)-[cytochrome] + nitrite + H2O. In terms of biological role, catalytic subunit of the periplasmic nitrate reductase complex NapAB. Receives electrons from NapB and catalyzes the reduction of nitrate to nitrite. This chain is Periplasmic nitrate reductase, found in Pseudomonas aeruginosa (strain LESB58).